The primary structure comprises 320 residues: Fructose-1,6-bisphosphatase class 1 (320 aa).

Positions 105, 124, 126, and 127 each coordinate Mg(2+). Substrate-binding positions include 127 to 130 (DGSS), Y233, and K263. A Mg(2+)-binding site is contributed by E269.

Belongs to the FBPase class 1 family. Homotetramer. It depends on Mg(2+) as a cofactor.

It is found in the cytoplasm. The catalysed reaction is beta-D-fructose 1,6-bisphosphate + H2O = beta-D-fructose 6-phosphate + phosphate. It participates in carbohydrate biosynthesis; gluconeogenesis. The protein is Fructose-1,6-bisphosphatase class 1 of Methanocorpusculum labreanum (strain ATCC 43576 / DSM 4855 / Z).